The chain runs to 183 residues: Adenine phosphoribosyltransferase (183 aa).

This sequence belongs to the purine/pyrimidine phosphoribosyltransferase family. In terms of assembly, homodimer.

Its subcellular location is the cytoplasm. The catalysed reaction is AMP + diphosphate = 5-phospho-alpha-D-ribose 1-diphosphate + adenine. It functions in the pathway purine metabolism; AMP biosynthesis via salvage pathway; AMP from adenine: step 1/1. Functionally, catalyzes a salvage reaction resulting in the formation of AMP, that is energically less costly than de novo synthesis. This Shewanella piezotolerans (strain WP3 / JCM 13877) protein is Adenine phosphoribosyltransferase.